Here is a 107-residue protein sequence, read N- to C-terminus: Nucleoid-associated protein A1E_05550 (107 aa).

Belongs to the YbaB/EbfC family. Homodimer.

It localises to the cytoplasm. The protein resides in the nucleoid. Functionally, binds to DNA and alters its conformation. May be involved in regulation of gene expression, nucleoid organization and DNA protection. In Rickettsia canadensis (strain McKiel), this protein is Nucleoid-associated protein A1E_05550.